The chain runs to 508 residues: Putative adenosylhomocysteinase 3 (508 aa).

Ser4 is subject to Phosphoserine. The tract at residues 24 to 81 is disordered; it reads DQKQEFNKRPTKIGRRSLSRSISQSSTDSYSSAASYTDSSDDETSPRDKQQKNSKGSS. Positions 32-41 are enriched in basic residues; that stretch reads RPTKIGRRSL. Over residues 42–61 the composition is skewed to low complexity; the sequence is SRSISQSSTDSYSSAASYTD. Residues Ser46, Ser49, Ser52, and Ser55 each carry the phosphoserine modification. Substrate is bound by residues Thr133, Asp207, and Glu232. NAD(+) is bound at residue 233–235; the sequence is SVT. 2 residues coordinate substrate: Lys262 and Asp266. NAD(+) contacts are provided by residues Asn267, 298–303, Glu319, Asn354, 375–377, and Asn422; these read GEVGKG and IGH.

It belongs to the adenosylhomocysteinase family. Homotetramer. Forms heteromultimers with AHCYL1 (via the C-terminal region). Interacts with ITPR1; with lower affinity than AHCYL1 and maybe via ITPR1. Interacts with SLC4A4. Interacts with ZCCHC4. NAD(+) is required as a cofactor.

Its subcellular location is the cytoplasm. The protein resides in the microsome. It carries out the reaction S-adenosyl-L-homocysteine + H2O = L-homocysteine + adenosine. It functions in the pathway amino-acid biosynthesis; L-homocysteine biosynthesis; L-homocysteine from S-adenosyl-L-homocysteine: step 1/1. Functionally, may regulate the electrogenic sodium/bicarbonate cotransporter SLC4A4 activity and Mg(2+)-sensitivity. On the contrary of its homolog AHCYL1, does not regulate ITPR1 sensitivity to inositol 1,4,5-trisphosphate. In Pongo abelii (Sumatran orangutan), this protein is Putative adenosylhomocysteinase 3 (AHCYL2).